Here is a 346-residue protein sequence, read N- to C-terminus: uncharacterized protein (346 aa).

This is an uncharacterized protein from Mycoplasma genitalium (strain ATCC 33530 / DSM 19775 / NCTC 10195 / G37) (Mycoplasmoides genitalium).